We begin with the raw amino-acid sequence, 380 residues long: Lipid-A-disaccharide synthase (380 aa).

Belongs to the LpxB family.

It carries out the reaction a lipid X + a UDP-2-N,3-O-bis[(3R)-3-hydroxyacyl]-alpha-D-glucosamine = a lipid A disaccharide + UDP + H(+). The protein operates within bacterial outer membrane biogenesis; LPS lipid A biosynthesis. Condensation of UDP-2,3-diacylglucosamine and 2,3-diacylglucosamine-1-phosphate to form lipid A disaccharide, a precursor of lipid A, a phosphorylated glycolipid that anchors the lipopolysaccharide to the outer membrane of the cell. The sequence is that of Lipid-A-disaccharide synthase from Rickettsia typhi (strain ATCC VR-144 / Wilmington).